A 199-amino-acid chain; its full sequence is uncharacterized protein (199 aa).

Transmembrane regions (helical) follow at residues 27-47 (LIKITLVNLYLALTVPLPILA), 55-75 (LLTLLLTVGLMGGLVALVAAL), and 172-192 (LLLLLFTFLLWGSQLAIVLLL).

The protein resides in the cell membrane. This is an uncharacterized protein from Synechocystis sp. (strain ATCC 27184 / PCC 6803 / Kazusa).